The sequence spans 467 residues: Bifunctional protein GlmU (467 aa).

A pyrophosphorylase region spans residues 1-229 (MEKNTIILAA…FSESMGVNDR (229 aa)). Residues 8–11 (LAAG), Lys-22, Gln-72, 77–78 (GT), 100–102 (SGD), Gly-139, Glu-154, Asn-169, and Asn-227 each bind UDP-N-acetyl-alpha-D-glucosamine. Asp-102 serves as a coordination point for Mg(2+). Asn-227 is a binding site for Mg(2+). Residues 230–250 (LALSKATKVMQRRINEEHMVN) form a linker region. The interval 251 to 467 (GVTIIDPENT…ALKAEEENNK (217 aa)) is N-acetyltransferase. Residues Arg-332 and Lys-350 each coordinate UDP-N-acetyl-alpha-D-glucosamine. Catalysis depends on His-362, which acts as the Proton acceptor. UDP-N-acetyl-alpha-D-glucosamine is bound by residues Tyr-365 and Asn-376. Acetyl-CoA-binding positions include 385–386 (NY), Ser-404, Ala-422, and Arg-439.

It in the N-terminal section; belongs to the N-acetylglucosamine-1-phosphate uridyltransferase family. This sequence in the C-terminal section; belongs to the transferase hexapeptide repeat family. As to quaternary structure, homotrimer. It depends on Mg(2+) as a cofactor.

Its subcellular location is the cytoplasm. The catalysed reaction is alpha-D-glucosamine 1-phosphate + acetyl-CoA = N-acetyl-alpha-D-glucosamine 1-phosphate + CoA + H(+). It catalyses the reaction N-acetyl-alpha-D-glucosamine 1-phosphate + UTP + H(+) = UDP-N-acetyl-alpha-D-glucosamine + diphosphate. The protein operates within nucleotide-sugar biosynthesis; UDP-N-acetyl-alpha-D-glucosamine biosynthesis; N-acetyl-alpha-D-glucosamine 1-phosphate from alpha-D-glucosamine 6-phosphate (route II): step 2/2. Its pathway is nucleotide-sugar biosynthesis; UDP-N-acetyl-alpha-D-glucosamine biosynthesis; UDP-N-acetyl-alpha-D-glucosamine from N-acetyl-alpha-D-glucosamine 1-phosphate: step 1/1. It participates in bacterial outer membrane biogenesis; LPS lipid A biosynthesis. Catalyzes the last two sequential reactions in the de novo biosynthetic pathway for UDP-N-acetylglucosamine (UDP-GlcNAc). The C-terminal domain catalyzes the transfer of acetyl group from acetyl coenzyme A to glucosamine-1-phosphate (GlcN-1-P) to produce N-acetylglucosamine-1-phosphate (GlcNAc-1-P), which is converted into UDP-GlcNAc by the transfer of uridine 5-monophosphate (from uridine 5-triphosphate), a reaction catalyzed by the N-terminal domain. The chain is Bifunctional protein GlmU from Pediococcus pentosaceus (strain ATCC 25745 / CCUG 21536 / LMG 10740 / 183-1w).